We begin with the raw amino-acid sequence, 416 residues long: Isocitrate dehydrogenase [NADP] (416 aa).

NADP(+)-binding positions include 77–79 (TIT) and arginine 84. Threonine 79 provides a ligand contact to substrate. Substrate-binding positions include 96–102 (SPNGTIR), arginine 111, and arginine 134. Aspartate 254 lines the Mn(2+) pocket. Lysine 262 provides a ligand contact to NADP(+). Aspartate 277 is a binding site for Mn(2+). Residues 312-317 (GTVTRH) and asparagine 330 contribute to the NADP(+) site.

It belongs to the isocitrate and isopropylmalate dehydrogenases family. As to quaternary structure, heterodimer. It depends on Mg(2+) as a cofactor. Requires Mn(2+) as cofactor.

Its subcellular location is the cytoplasm. It carries out the reaction D-threo-isocitrate + NADP(+) = 2-oxoglutarate + CO2 + NADPH. Functionally, may supply 2-oxoglutarate for amino acid biosynthesis and ammonia assimilation via the glutamine synthetase/glutamate synthase (GS/GOGAT) pathway. The sequence is that of Isocitrate dehydrogenase [NADP] (ICDH-1) from Solanum tuberosum (Potato).